We begin with the raw amino-acid sequence, 154 residues long: Transcriptional repressor NrdR (154 aa).

A zinc finger spans residues 3 to 34; the sequence is CPTCKYNGTRVVDSRPADDGNSIRRRRECEKC. One can recognise an ATP-cone domain in the interval 49–139; it reads LIVVKKDGAR…VYRQFKDISV (91 aa).

The protein belongs to the NrdR family. Zn(2+) serves as cofactor.

Its function is as follows. Negatively regulates transcription of bacterial ribonucleotide reductase nrd genes and operons by binding to NrdR-boxes. The protein is Transcriptional repressor NrdR of Listeria welshimeri serovar 6b (strain ATCC 35897 / DSM 20650 / CCUG 15529 / CIP 8149 / NCTC 11857 / SLCC 5334 / V8).